The following is a 64-amino-acid chain: Cytochrome c oxidase subunit 2 (64 aa).

Over 1-14 (MAHPSQLGFQDAAS) the chain is Mitochondrial intermembrane. The chain crosses the membrane as a helical span at residues 15 to 45 (PMMEELLHFHDHALMVVFLISTFVLYIILTM). Over 46–64 (LTTKLTDKLILESHEIEII) the chain is Mitochondrial matrix.

The protein belongs to the cytochrome c oxidase subunit 2 family. Component of the cytochrome c oxidase (complex IV, CIV), a multisubunit enzyme composed of 14 subunits. The complex is composed of a catalytic core of 3 subunits MT-CO1, MT-CO2 and MT-CO3, encoded in the mitochondrial DNA, and 11 supernumerary subunits COX4I, COX5A, COX5B, COX6A, COX6B, COX6C, COX7A, COX7B, COX7C, COX8 and NDUFA4, which are encoded in the nuclear genome. The complex exists as a monomer or a dimer and forms supercomplexes (SCs) in the inner mitochondrial membrane with NADH-ubiquinone oxidoreductase (complex I, CI) and ubiquinol-cytochrome c oxidoreductase (cytochrome b-c1 complex, complex III, CIII), resulting in different assemblies (supercomplex SCI(1)III(2)IV(1) and megacomplex MCI(2)III(2)IV(2)). Found in a complex with TMEM177, COA6, COX18, COX20, SCO1 and SCO2. Interacts with TMEM177 in a COX20-dependent manner. Interacts with COX20. Interacts with COX16. Cu cation is required as a cofactor.

Its subcellular location is the mitochondrion inner membrane. It catalyses the reaction 4 Fe(II)-[cytochrome c] + O2 + 8 H(+)(in) = 4 Fe(III)-[cytochrome c] + 2 H2O + 4 H(+)(out). Its function is as follows. Component of the cytochrome c oxidase, the last enzyme in the mitochondrial electron transport chain which drives oxidative phosphorylation. The respiratory chain contains 3 multisubunit complexes succinate dehydrogenase (complex II, CII), ubiquinol-cytochrome c oxidoreductase (cytochrome b-c1 complex, complex III, CIII) and cytochrome c oxidase (complex IV, CIV), that cooperate to transfer electrons derived from NADH and succinate to molecular oxygen, creating an electrochemical gradient over the inner membrane that drives transmembrane transport and the ATP synthase. Cytochrome c oxidase is the component of the respiratory chain that catalyzes the reduction of oxygen to water. Electrons originating from reduced cytochrome c in the intermembrane space (IMS) are transferred via the dinuclear copper A center (CU(A)) of subunit 2 and heme A of subunit 1 to the active site in subunit 1, a binuclear center (BNC) formed by heme A3 and copper B (CU(B)). The BNC reduces molecular oxygen to 2 water molecules using 4 electrons from cytochrome c in the IMS and 4 protons from the mitochondrial matrix. The protein is Cytochrome c oxidase subunit 2 (mt-co2) of Geophagus steindachneri (Red hump earth eater).